A 206-amino-acid polypeptide reads, in one-letter code: Ribosomal RNA small subunit methyltransferase G (206 aa).

S-adenosyl-L-methionine contacts are provided by residues Gly-73, Leu-78, 124–125 (VE), and Arg-139.

The protein belongs to the methyltransferase superfamily. RNA methyltransferase RsmG family.

The protein localises to the cytoplasm. It carries out the reaction guanosine(527) in 16S rRNA + S-adenosyl-L-methionine = N(7)-methylguanosine(527) in 16S rRNA + S-adenosyl-L-homocysteine. Its function is as follows. Specifically methylates the N7 position of guanine in position 527 of 16S rRNA. The protein is Ribosomal RNA small subunit methyltransferase G of Yersinia pseudotuberculosis serotype O:1b (strain IP 31758).